The chain runs to 138 residues: HTH-type transcriptional regulator CymR (138 aa).

The HTH rrf2-type domain occupies 2–125 (KISTKGRYGL…DSTTLEDLAS (124 aa)). A DNA-binding region (H-T-H motif) is located at residues 28 to 51 (LKSIAQTNNLSEHYLEQLVSPLRN).

Homodimer. Forms homotetramers at higher concentrations of protein. Forms CymR(2):CysK(2) or CymR(4):CysK(4) complexes in the absence of O-acetylserine.

Master repressor of cysteine metabolism in B.subtilis. Controls the expression of genes involved either in cysteine synthesis from sulfide (cysK), sulfonates (ssu), or methionine (mccAB) or in cystine uptake (tcyP). Activity of CymR is positively regulated by CysK in response to cysteine availability. When cysteine is present, the pool of O-acetylserine (OAS) is low, which leads to the formation of a CymR-CysK complex and transcriptional repression of the CymR regulon occurs. In the absence of cysteine, the OAS pool is high and the CymR-CysK complex is mostly dissociated, leading to a faster dissociation of CymR from its DNA targets and the lifting of CymR-dependent repression. This Bacillus subtilis (strain 168) protein is HTH-type transcriptional regulator CymR (cymR).